We begin with the raw amino-acid sequence, 197 residues long: Small ribosomal subunit protein uS4 (197 aa).

In terms of domain architecture, S4 RNA-binding spans 88–150 (SRLDNLVYRM…AKSLEIILDN (63 aa)).

This sequence belongs to the universal ribosomal protein uS4 family. In terms of assembly, part of the 30S ribosomal subunit. Contacts protein S5. The interaction surface between S4 and S5 is involved in control of translational fidelity.

Its function is as follows. One of the primary rRNA binding proteins, it binds directly to 16S rRNA where it nucleates assembly of the body of the 30S subunit. Functionally, with S5 and S12 plays an important role in translational accuracy. The protein is Small ribosomal subunit protein uS4 of Azobacteroides pseudotrichonymphae genomovar. CFP2.